The following is a 258-amino-acid chain: Pimeloyl-[acyl-carrier protein] methyl ester esterase (258 aa).

The AB hydrolase-1 domain maps to 16–241 (LVLLHGWGLN…GSAHAPFVSH (226 aa)). Substrate is bound by residues Trp-22, 82–83 (SM), and 143–147 (FLALQ). The Nucleophile role is filled by Ser-82. Active-site residues include Asp-207 and His-235. Residue His-235 participates in substrate binding.

This sequence belongs to the AB hydrolase superfamily. Carboxylesterase BioH family. As to quaternary structure, monomer.

The protein localises to the cytoplasm. It carries out the reaction 6-carboxyhexanoyl-[ACP] methyl ester + H2O = 6-carboxyhexanoyl-[ACP] + methanol + H(+). It functions in the pathway cofactor biosynthesis; biotin biosynthesis. The physiological role of BioH is to remove the methyl group introduced by BioC when the pimeloyl moiety is complete. It allows to synthesize pimeloyl-ACP via the fatty acid synthetic pathway through the hydrolysis of the ester bonds of pimeloyl-ACP esters. This chain is Pimeloyl-[acyl-carrier protein] methyl ester esterase, found in Yersinia enterocolitica serotype O:8 / biotype 1B (strain NCTC 13174 / 8081).